A 402-amino-acid chain; its full sequence is Elongation factor Tu (402 aa).

Positions 10-212 (KPHVNIGTIG…AVDEYIPTPE (203 aa)) constitute a tr-type G domain. Positions 19–26 (GHVDHGKT) are G1. GTP is bound at residue 19–26 (GHVDHGKT). Residue Thr-26 coordinates Mg(2+). Residues 60 to 64 (GITIA) are G2. The tract at residues 81–84 (DCPG) is G3. GTP contacts are provided by residues 81-85 (DCPGH) and 136-139 (NKED). The tract at residues 136–139 (NKED) is G4. The segment at 177 to 179 (SAF) is G5.

This sequence belongs to the TRAFAC class translation factor GTPase superfamily. Classic translation factor GTPase family. EF-Tu/EF-1A subfamily. In terms of assembly, monomer.

The protein localises to the cytoplasm. The enzyme catalyses GTP + H2O = GDP + phosphate + H(+). GTP hydrolase that promotes the GTP-dependent binding of aminoacyl-tRNA to the A-site of ribosomes during protein biosynthesis. The polypeptide is Elongation factor Tu (Aliarcobacter butzleri (strain RM4018) (Arcobacter butzleri)).